A 177-amino-acid polypeptide reads, in one-letter code: RNA pyrophosphohydrolase (177 aa).

Positions 6–149 (GYRPNVGIVI…KRDVYRRVMK (144 aa)) constitute a Nudix hydrolase domain. The short motif at 38-59 (GGINPGESPEQAMYRELFEEVG) is the Nudix box element.

The protein belongs to the Nudix hydrolase family. RppH subfamily. A divalent metal cation is required as a cofactor.

In terms of biological role, accelerates the degradation of transcripts by removing pyrophosphate from the 5'-end of triphosphorylated RNA, leading to a more labile monophosphorylated state that can stimulate subsequent ribonuclease cleavage. This chain is RNA pyrophosphohydrolase, found in Pectobacterium atrosepticum (strain SCRI 1043 / ATCC BAA-672) (Erwinia carotovora subsp. atroseptica).